A 681-amino-acid polypeptide reads, in one-letter code: PAB-dependent poly(A)-specific ribonuclease subunit pan3-like (681 aa).

The C3H1-type zinc-finger motif lies at Phe-9–Gln-38. 2 disordered regions span residues Gln-38–Ser-58 and Ser-82–Leu-123. The span at Ala-41 to Ala-50 shows a compositional bias: low complexity. Residues Lys-96–Lys-106 are compositionally biased toward polar residues. Residue Ser-165 is modified to Phosphoserine.

The protein belongs to the protein kinase superfamily. PAN3 family.

Its subcellular location is the cytoplasm. Its function is as follows. Regulatory subunit of the poly(A)-nuclease (PAN) deadenylation complex. The polypeptide is PAB-dependent poly(A)-specific ribonuclease subunit pan3-like (Schizosaccharomyces pombe (strain 972 / ATCC 24843) (Fission yeast)).